A 50-amino-acid chain; its full sequence is Small ribosomal subunit protein uS14 (50 aa).

Cysteine 15, cysteine 18, cysteine 33, and cysteine 36 together coordinate Zn(2+).

It belongs to the universal ribosomal protein uS14 family. Zinc-binding uS14 subfamily. As to quaternary structure, part of the 30S ribosomal subunit. Zn(2+) serves as cofactor.

In terms of biological role, binds 16S rRNA, required for the assembly of 30S particles. The polypeptide is Small ribosomal subunit protein uS14 (Methanosarcina mazei (strain ATCC BAA-159 / DSM 3647 / Goe1 / Go1 / JCM 11833 / OCM 88) (Methanosarcina frisia)).